Consider the following 199-residue polypeptide: HTH-type transcriptional regulator BetI (199 aa).

The HTH tetR-type domain occupies 8–68 (EIRKPQLVKA…ETMREILRQL (61 aa)). Positions 31–50 (SISLISKEAGVSTGIINHYF) form a DNA-binding region, H-T-H motif.

It functions in the pathway amine and polyamine biosynthesis; betaine biosynthesis via choline pathway [regulation]. In terms of biological role, repressor involved in the biosynthesis of the osmoprotectant glycine betaine. It represses transcription of the choline transporter BetT and the genes of BetAB involved in the synthesis of glycine betaine. In Vibrio campbellii (strain ATCC BAA-1116), this protein is HTH-type transcriptional regulator BetI.